Reading from the N-terminus, the 409-residue chain is Adenosine receptor A2a (409 aa).

Residues 1-4 are Extracellular-facing; the sequence is MSSS. Residues 5–29 traverse the membrane as a helical segment; the sequence is VYITVELVIAVLAILGNVLVCWAVW. Residues 30–39 lie on the Cytoplasmic side of the membrane; that stretch reads INSNLQNVTN. A helical transmembrane segment spans residues 40–63; it reads YFVVSLAAADIAVGVLAIPFAITI. The Extracellular segment spans residues 64–74; that stretch reads STGFCAACHGC. 3 disulfides stabilise this stretch: Cys68–Cys156, Cys71–Cys143, and Cys74–Cys163. A helical membrane pass occupies residues 75 to 97; sequence LFFACFVLVLTQSSIFSLLTITI. Topologically, residues 98-117 are cytoplasmic; the sequence is DRYIAIRIPLRYNGLVTCTR. Residues 118–140 form a helical membrane-spanning segment; sequence AKGIIAICWVLSFAIGLTPMLGW. Residues 141-170 lie on the Extracellular side of the membrane; it reads NNCSQPKGDKNHSESCDEGQVTCLFEDVVP. Asn142 and Asn151 each carry an N-linked (GlcNAc...) asparagine glycan. Glu166 is a binding site for adenosine. Residues 171–195 form a helical membrane-spanning segment; the sequence is MNYMVYYNFFAFVLVPLLLMLGIYL. Over 196 to 231 the chain is Cytoplasmic; it reads RIFLAARRQLKQMESQPLPGERTRSTLQKEVHPAKS. A helical membrane pass occupies residues 232 to 255; that stretch reads LAIIVGLFALCCLPLNIINCFTFF. Residue Asn250 coordinates adenosine. Residues Cys256 and Cys259 are joined by a disulfide bond. At 256 to 263 the chain is on the extracellular side; the sequence is CPECDHAP. Residues 264–287 form a helical membrane-spanning segment; the sequence is PWLMYLTIILSHGNSVVNPLIYAY. Ser274 and His275 together coordinate adenosine. Over 288–409 the chain is Cytoplasmic; the sequence is RIREFRQTFR…PPAHGGAGVS (122 aa). 2 disordered regions span residues 316 to 336 and 369 to 409; these read TSAR…LRLN and QRSH…AGVS.

The protein belongs to the G-protein coupled receptor 1 family. Interacts (via cytoplasmic C-terminal domain) with USP4; the interaction is direct. May interact with DRD4. Interacts with NECAB2. Interacts (via cytoplasmic C-terminal domain) with GAS2L2; interaction enhances receptor-mediated adenylyl cyclase activity. In terms of processing, ubiquitinated. Deubiquitinated by USP4; leading to stabilization and expression at the cell surface.

It localises to the cell membrane. Its function is as follows. Receptor for adenosine. The activity of this receptor is mediated by G proteins which activate adenylyl cyclase. The sequence is that of Adenosine receptor A2a (ADORA2A) from Cavia porcellus (Guinea pig).